The following is a 104-amino-acid chain: Secreted RxLR effector protein 54 (104 aa).

The N-terminal stretch at 1 to 19 (MIFTLLGLALVATKSACIA) is a signal peptide. The short motif at 52–55 (RSLR) is the RxLR element. A glycan (N-linked (GlcNAc...) asparagine) is linked at Asn64.

This sequence belongs to the RxLR effector family.

Its subcellular location is the secreted. It localises to the host chloroplast envelope. It is found in the host mitochondrion. The protein resides in the host nucleus. The protein localises to the host cytoplasm. Secreted effector that completely suppresses the host cell death induced by cell death-inducing proteins. This chain is Secreted RxLR effector protein 54, found in Plasmopara viticola (Downy mildew of grapevine).